The following is a 325-amino-acid chain: Small ribosomal subunit biogenesis GTPase RsgA (325 aa).

The CP-type G domain occupies 80 to 241 (LSKQIHIIAS…IIDTPGIKGF (162 aa)). Residues 129 to 132 (NKID) and 183 to 191 (GHSGVGKST) contribute to the GTP site. 4 residues coordinate Zn(2+): Cys265, Cys270, His272, and Cys278.

The protein belongs to the TRAFAC class YlqF/YawG GTPase family. RsgA subfamily. As to quaternary structure, monomer. Associates with 30S ribosomal subunit, binds 16S rRNA. Requires Zn(2+) as cofactor.

It is found in the cytoplasm. One of several proteins that assist in the late maturation steps of the functional core of the 30S ribosomal subunit. Helps release RbfA from mature subunits. May play a role in the assembly of ribosomal proteins into the subunit. Circularly permuted GTPase that catalyzes slow GTP hydrolysis, GTPase activity is stimulated by the 30S ribosomal subunit. The protein is Small ribosomal subunit biogenesis GTPase RsgA of Flavobacterium johnsoniae (strain ATCC 17061 / DSM 2064 / JCM 8514 / BCRC 14874 / CCUG 350202 / NBRC 14942 / NCIMB 11054 / UW101) (Cytophaga johnsonae).